A 715-amino-acid polypeptide reads, in one-letter code: Ribosomal RNA large subunit methyltransferase K/L (715 aa).

Residues 47-158 (LGYKISLWTR…RDNVTIFLDF (112 aa)) form the THUMP domain.

It belongs to the methyltransferase superfamily. RlmKL family.

It is found in the cytoplasm. It catalyses the reaction guanosine(2445) in 23S rRNA + S-adenosyl-L-methionine = N(2)-methylguanosine(2445) in 23S rRNA + S-adenosyl-L-homocysteine + H(+). It carries out the reaction guanosine(2069) in 23S rRNA + S-adenosyl-L-methionine = N(2)-methylguanosine(2069) in 23S rRNA + S-adenosyl-L-homocysteine + H(+). In terms of biological role, specifically methylates the guanine in position 2445 (m2G2445) and the guanine in position 2069 (m7G2069) of 23S rRNA. This chain is Ribosomal RNA large subunit methyltransferase K/L, found in Colwellia psychrerythraea (strain 34H / ATCC BAA-681) (Vibrio psychroerythus).